Reading from the N-terminus, the 178-residue chain is Large ribosomal subunit protein uL10 (178 aa).

It belongs to the universal ribosomal protein uL10 family. Part of the ribosomal stalk of the 50S ribosomal subunit. The N-terminus interacts with L11 and the large rRNA to form the base of the stalk. The C-terminus forms an elongated spine to which L12 dimers bind in a sequential fashion forming a multimeric L10(L12)X complex.

Forms part of the ribosomal stalk, playing a central role in the interaction of the ribosome with GTP-bound translation factors. The protein is Large ribosomal subunit protein uL10 of Stenotrophomonas maltophilia (strain R551-3).